Consider the following 304-residue polypeptide: Putative S-adenosyl-L-methionine-dependent methyltransferase Mmcs_1043 (304 aa).

Residues D130 and 159 to 160 (DL) contribute to the S-adenosyl-L-methionine site.

The protein belongs to the UPF0677 family.

Exhibits S-adenosyl-L-methionine-dependent methyltransferase activity. The polypeptide is Putative S-adenosyl-L-methionine-dependent methyltransferase Mmcs_1043 (Mycobacterium sp. (strain MCS)).